A 467-amino-acid chain; its full sequence is Immunoglobulin superfamily member 21 (467 aa).

An N-terminal signal peptide occupies residues 1–24 (MRTAPSLRRCVCLLLAAILDLARG). An Ig-like 1 domain is found at 25–132 (YLTVNIEPLP…RATREKVVLA (108 aa)). Residues Cys46 and Cys116 are joined by a disulfide bond. N-linked (GlcNAc...) asparagine glycosylation is found at Asn82 and Asn165. Residues 229-259 (LSLLDAENRGGRPYTERPSRGLTPDPNILLQ) are disordered. Residues 234–247 (AENRGGRPYTERPS) are compositionally biased toward basic and acidic residues. Residues 344–429 (PKIVMTPSRA…GSTDTHTRLI (86 aa)) enclose the Ig-like 2 domain. Residues Asn407 and Asn444 are each glycosylated (N-linked (GlcNAc...) asparagine).

Interacts (Ig-like 1 domain) with NRXN2 (via Laminin G-like 1 domain) in a trans-interaction manner.

It localises to the postsynaptic cell membrane. Functionally, involved in synaptic inhibition in the brain. Selectively regulates inhibitory presynaptic differentiation through interacting with presynaptic NRXN2. In Homo sapiens (Human), this protein is Immunoglobulin superfamily member 21.